Here is a 284-residue protein sequence, read N- to C-terminus: MGLASSLFVPYAAYLRVYEPLAAFPEPERSHWYRYAGRADPPTAQDELRRSLVDLLPTPPVAVPVHESGDAFVAVVDGVTCVCPWRTRLRGWEALEALPELLPAPVLDAALPQVVRRQAADDHERWRERNPDARPWIRTATWHVPVRWFALFTAGEREYVQRSGEGEKAERPVLRYRTPMVEARRRVARGLRVLREALNESPLIDGLEDVGRWLEEFHPRSLVELDYGGLVHALTDDWLAGDRSAADVTEGLEALRAGDGVRAGEVYQRLVERWRAVREREFAS.

This is an uncharacterized protein from Streptomyces fradiae (Streptomyces roseoflavus).